The following is a 275-amino-acid chain: Phosphatidylglycerol--prolipoprotein diacylglyceryl transferase (275 aa).

A run of 7 helical transmembrane segments spans residues 22-42, 61-81, 96-116, 125-145, 177-197, 204-224, and 238-258; these read LSVRWYGLMYLFGFAFAMWLA, LLFYGFLGVILGGRVGYVLFY, IWTGGMSFHGGLIGVITAMIW, FFTVADFVAPLIPFGLGVGRI, SQLYQFALEGVVLFIILNLFW, GAISGLFLFCYGLFRFLVEFV, and ISMGQILSMPMIVAGALMVWA. An a 1,2-diacyl-sn-glycero-3-phospho-(1'-sn-glycerol)-binding site is contributed by Arg-144.

This sequence belongs to the Lgt family.

The protein localises to the cell inner membrane. It catalyses the reaction L-cysteinyl-[prolipoprotein] + a 1,2-diacyl-sn-glycero-3-phospho-(1'-sn-glycerol) = an S-1,2-diacyl-sn-glyceryl-L-cysteinyl-[prolipoprotein] + sn-glycerol 1-phosphate + H(+). It participates in protein modification; lipoprotein biosynthesis (diacylglyceryl transfer). Catalyzes the transfer of the diacylglyceryl group from phosphatidylglycerol to the sulfhydryl group of the N-terminal cysteine of a prolipoprotein, the first step in the formation of mature lipoproteins. This chain is Phosphatidylglycerol--prolipoprotein diacylglyceryl transferase, found in Aeromonas salmonicida (strain A449).